A 497-amino-acid polypeptide reads, in one-letter code: Glycerol kinase (497 aa).

Position 12 (Thr12) interacts with ADP. Positions 12, 13, and 14 each coordinate ATP. Thr12 serves as a coordination point for sn-glycerol 3-phosphate. Arg16 is a binding site for ADP. Sn-glycerol 3-phosphate-binding residues include Arg82, Glu83, Tyr134, and Asp243. Glycerol is bound by residues Arg82, Glu83, Tyr134, Asp243, and Gln244. Positions 265 and 308 each coordinate ADP. Thr265, Gly308, Gln312, and Gly411 together coordinate ATP. Gly411 contributes to the ADP binding site.

This sequence belongs to the FGGY kinase family.

It catalyses the reaction glycerol + ATP = sn-glycerol 3-phosphate + ADP + H(+). The protein operates within polyol metabolism; glycerol degradation via glycerol kinase pathway; sn-glycerol 3-phosphate from glycerol: step 1/1. Its activity is regulated as follows. Inhibited by fructose 1,6-bisphosphate (FBP). Its function is as follows. Key enzyme in the regulation of glycerol uptake and metabolism. Catalyzes the phosphorylation of glycerol to yield sn-glycerol 3-phosphate. The chain is Glycerol kinase from Allorhizobium ampelinum (strain ATCC BAA-846 / DSM 112012 / S4) (Agrobacterium vitis (strain S4)).